The primary structure comprises 482 residues: Auxin transporter-like protein 2 (482 aa).

The Cytoplasmic segment spans residues 1-58 (MVPAGDQAEEAIVADAGKEEAEVRAAMGVEQDGKFSMTSLLWHGGSVWDAWFSCASNQ). The chain crosses the membrane as a helical span at residues 59–76 (VAQVLLTLPYSFSQLGML). Over 77–78 (SG) the chain is Extracellular. The helical transmembrane segment at 79–99 (LLLQVFYGLMGSWTAYLISVL) threads the bilayer. The Cytoplasmic portion of the chain corresponds to 100–134 (YVEYRARKEKEGVSFKNHVIQWFEVLDGLLGPYWK). The helical transmembrane segment at 135 to 155 (AAGLAFNCTFLLFGSVIQLIA) threads the bilayer. The Extracellular portion of the chain corresponds to 156 to 171 (CASNIYYINDRLDKRT). The chain crosses the membrane as a helical span at residues 172-192 (WTYIFGACCSTTVFIPSFHNY). A topological domain (cytoplasmic) is located at residue Arg-193. The helical transmembrane segment at 194-214 (IWSFLGLGMTTYTAWYLAIAA) threads the bilayer. The Extracellular segment spans residues 215–231 (AVHGQVDGVTHSGPSKM). A helical transmembrane segment spans residues 232–252 (VLYFTGATNILYTFGGHAVTV). The Cytoplasmic segment spans residues 253–265 (EIMHAMWKPQKFK). Residues 266–286 (YIYLVATLYVFTLTLPSASAM) traverse the membrane as a helical segment. Topologically, residues 287–313 (YWAFGDALLTHSNAFSLLPRSGWRDAA) are extracellular. Residues 314–334 (VILMLIHQFITFGFACTPLYF) form a helical membrane-spanning segment. At 335–355 (VWEKAIGMHGTRSVLTRALAR) the chain is on the cytoplasmic side. The chain crosses the membrane as a helical span at residues 356–376 (LPIVVPIWFLAIIFPFFGPIN). A topological domain (extracellular) is located at residue Ser-377. The helical transmembrane segment at 378–398 (AVGALLVSFTVYIIPSLSHIL) threads the bilayer. The Cytoplasmic portion of the chain corresponds to 399–423 (TYRSASARLNAAEKPPPFLPSWSGM). A helical membrane pass occupies residues 424 to 444 (FVVNVFVVAWVLVVGFGLGGW). The Extracellular portion of the chain corresponds to 445–482 (ASVTNFIKQIDTFGLFAKCYQCPPRAHAGAPLPAPPRH).

Belongs to the amino acid/polyamine transporter 2 family. Amino acid/auxin permease (AAAP) (TC 2.A.18.1) subfamily.

The protein localises to the cell membrane. Functionally, carrier protein involved in proton-driven auxin influx. May mediate the formation of auxin gradient from developing leaves (site of auxin biosynthesis) to tips. This Oryza sativa subsp. japonica (Rice) protein is Auxin transporter-like protein 2.